The chain runs to 640 residues: 1,4-alpha-glucan branching enzyme GlgB (640 aa).

Catalysis depends on Asp317, which acts as the Nucleophile. The Proton donor role is filled by Glu370.

This sequence belongs to the glycosyl hydrolase 13 family. GlgB subfamily. As to quaternary structure, monomer.

It carries out the reaction Transfers a segment of a (1-&gt;4)-alpha-D-glucan chain to a primary hydroxy group in a similar glucan chain.. It functions in the pathway glycan biosynthesis; glycogen biosynthesis. In terms of biological role, catalyzes the formation of the alpha-1,6-glucosidic linkages in glycogen by scission of a 1,4-alpha-linked oligosaccharide from growing alpha-1,4-glucan chains and the subsequent attachment of the oligosaccharide to the alpha-1,6 position. In Nitratidesulfovibrio vulgaris (strain ATCC 29579 / DSM 644 / CCUG 34227 / NCIMB 8303 / VKM B-1760 / Hildenborough) (Desulfovibrio vulgaris), this protein is 1,4-alpha-glucan branching enzyme GlgB.